Here is a 352-residue protein sequence, read N- to C-terminus: PhoH-like protein (352 aa).

The tract at residues 1-21 (MTSRETRAADAAGARQADAQV) is disordered. Over residues 9-20 (ADAAGARQADAQ) the composition is skewed to low complexity. 150–157 (GPAGTGKT) serves as a coordination point for ATP.

Belongs to the PhoH family.

Its subcellular location is the cytoplasm. In Mycobacterium bovis (strain ATCC BAA-935 / AF2122/97), this protein is PhoH-like protein.